Here is a 323-residue protein sequence, read N- to C-terminus: ATP synthase gamma chain (323 aa).

Belongs to the ATPase gamma chain family. As to quaternary structure, F-type ATPases have 2 components, CF(1) - the catalytic core - and CF(0) - the membrane proton channel. CF(1) has five subunits: alpha(3), beta(3), gamma(1), delta(1), epsilon(1). CF(0) has three main subunits: a, b and c.

It localises to the cell inner membrane. Functionally, produces ATP from ADP in the presence of a proton gradient across the membrane. The gamma chain is believed to be important in regulating ATPase activity and the flow of protons through the CF(0) complex. This is ATP synthase gamma chain from Rickettsia rickettsii (strain Iowa).